Here is a 137-residue protein sequence, read N- to C-terminus: Large ribosomal subunit protein uL16 (137 aa).

The protein belongs to the universal ribosomal protein uL16 family. Part of the 50S ribosomal subunit.

Its function is as follows. Binds 23S rRNA and is also seen to make contacts with the A and possibly P site tRNAs. This is Large ribosomal subunit protein uL16 from Mycoplasma mycoides subsp. mycoides SC (strain CCUG 32753 / NCTC 10114 / PG1).